Consider the following 625-residue polypeptide: Putative surface protein bspA-like (625 aa).

The Extracellular portion of the chain corresponds to M1–G548. N-linked (GlcNAc...) asparagine glycosylation occurs at N15. 13 LRR repeats span residues C38–G60, C61–E83, S85–G106, C107–G129, C153–G175, C176–E198, S200–R221, C222–C245, K247–K267, L271–N293, I325–H347, F348–F368, and I369–D392. The N-linked (GlcNAc...) asparagine glycan is linked to N227. Residues K439 to N538 are disordered. Positions E443–G526 are enriched in low complexity. The chain crosses the membrane as a helical span at residues I549–F571. The Cytoplasmic segment spans residues M572–V625. A disordered region spans residues K577–V625. Polar residues predominate over residues E588 to V625.

Its subcellular location is the cell membrane. In terms of biological role, may bind host tissue. This chain is Putative surface protein bspA-like (BSPAL1), found in Trichomonas vaginalis.